A 106-amino-acid chain; its full sequence is Class II hydrophobin 6 (106 aa).

The signal sequence occupies residues 1 to 16 (MQFFTVATLFLATAFA). Cystine bridges form between Cys36–Cys86, Cys47–Cys77, Cys48–Cys60, and Cys87–Cys98.

The protein belongs to the cerato-ulmin hydrophobin family. As to quaternary structure, homodimer. Homodimers further self-assemble to form highly ordered films at water-air interfaces through intermolecular interactions.

Its subcellular location is the secreted. It localises to the cell wall. Aerial growth, conidiation, and dispersal of filamentous fungi in the environment rely upon a capability of their secreting small amphipathic proteins called hydrophobins (HPBs) with low sequence identity. Class I can self-assemble into an outermost layer of rodlet bundles on aerial cell surfaces, conferring cellular hydrophobicity that supports fungal growth, development and dispersal; whereas Class II form highly ordered films at water-air interfaces through intermolecular interactions but contribute nothing to the rodlet structure. HFB2-6 is a class II hydrophobin that has a function in root colonization. Acts as an effector in poplar by up-regulating the expression of genes related to both the jasmonic acid and salicylic acid signal transduction pathways, which not only causes induced systemic resistance (ISR), but also systemic acquired resistance (SAR), giving poplar broad-spectrum resistance to pathogens. Also induces genes related to auxin signal transduction to promote poplar growth. Plays roles in interactions with both biotic and abiotic environmental conditions such as the presence of the pathogen Alternaria alternata or nutrient starvation conditions. In Trichoderma asperellum (strain ATCC 204424 / CBS 433.97 / NBRC 101777), this protein is Class II hydrophobin 6.